The following is a 354-amino-acid chain: Adenine deaminase (354 aa).

The Zn(2+) site is built by H19, H21, and H211. E214 acts as the Proton donor in catalysis. Residue D291 coordinates Zn(2+). Substrate is bound at residue D292.

It belongs to the metallo-dependent hydrolases superfamily. Adenosine and AMP deaminases family. Adenine deaminase type 2 subfamily. It depends on Zn(2+) as a cofactor.

It localises to the cytoplasm. The protein localises to the nucleus. The catalysed reaction is adenine + H2O + H(+) = hypoxanthine + NH4(+). In terms of biological role, catalyzes the hydrolytic deamination of adenine to hypoxanthine. Plays an important role in the purine salvage pathway and in nitrogen catabolism. This is Adenine deaminase (aah1) from Aspergillus fumigatus (strain ATCC MYA-4609 / CBS 101355 / FGSC A1100 / Af293) (Neosartorya fumigata).